A 419-amino-acid chain; its full sequence is GTPase Obg (419 aa).

Residues 1–156 (MRFVDYVSIE…FYLDLQLKVM (156 aa)) form the Obg domain. Residues 157–334 (ADIGLVGKPN…LGEKQKKLEI (178 aa)) enclose the OBG-type G domain. GTP contacts are provided by residues 163–170 (GKPNAGKS), 188–192 (FTTLA), 209–212 (DLPG), 278–281 (NKCD), and 315–317 (NII). Residues S170 and T190 each coordinate Mg(2+). An OCT domain is found at 342 to 419 (IEFNLKAPFL…RIYEFEFHWN (78 aa)).

Belongs to the TRAFAC class OBG-HflX-like GTPase superfamily. OBG GTPase family. Monomer. It depends on Mg(2+) as a cofactor.

The protein resides in the cytoplasm. An essential GTPase which binds GTP, GDP and possibly (p)ppGpp with moderate affinity, with high nucleotide exchange rates and a fairly low GTP hydrolysis rate. Plays a role in control of the cell cycle, stress response, ribosome biogenesis and in those bacteria that undergo differentiation, in morphogenesis control. The protein is GTPase Obg of Mesomycoplasma hyopneumoniae (strain J / ATCC 25934 / NCTC 10110) (Mycoplasma hyopneumoniae).